Consider the following 421-residue polypeptide: UDP-N-acetylglucosamine 1-carboxyvinyltransferase (421 aa).

22–23 provides a ligand contact to phosphoenolpyruvate; it reads KN. UDP-N-acetyl-alpha-D-glucosamine is bound at residue arginine 93. Cysteine 117 (proton donor) is an active-site residue. Position 117 is a 2-(S-cysteinyl)pyruvic acid O-phosphothioketal (cysteine 117). UDP-N-acetyl-alpha-D-glucosamine is bound by residues 122–126, aspartate 308, and isoleucine 330; that span reads RPVDL.

It belongs to the EPSP synthase family. MurA subfamily.

It localises to the cytoplasm. The catalysed reaction is phosphoenolpyruvate + UDP-N-acetyl-alpha-D-glucosamine = UDP-N-acetyl-3-O-(1-carboxyvinyl)-alpha-D-glucosamine + phosphate. The protein operates within cell wall biogenesis; peptidoglycan biosynthesis. Its function is as follows. Cell wall formation. Adds enolpyruvyl to UDP-N-acetylglucosamine. This is UDP-N-acetylglucosamine 1-carboxyvinyltransferase from Pseudomonas putida (strain ATCC 700007 / DSM 6899 / JCM 31910 / BCRC 17059 / LMG 24140 / F1).